Here is a 577-residue protein sequence, read N- to C-terminus: Double-stranded RNA-binding protein Staufen homolog 1 (577 aa).

N-acetylserine is present on S2. The segment covering 34–44 (SIPSTTSSLPS) has biased composition (polar residues). The segment at 34–55 (SIPSTTSSLPSENAGRPIQNSA) is disordered. The DRBM 1 domain maps to 72 to 162 (TPTVELNALC…AAKALRILQN (91 aa)). R108 bears the Asymmetric dimethylarginine mark. Asymmetric dimethylarginine; alternate is present on R115. R115 is modified (omega-N-methylarginine; alternate). At S176 the chain carries Phosphoserine. The DRBM 2 domain maps to 184–251 (SEISQVFEIA…AIAVLEELKK (68 aa)). A Phosphoserine modification is found at S278. A DRBM 3 domain is found at 286-354 (NPISRLAQIQ…AENMLEILGF (69 aa)). The interval 360–397 (QPTKPALKSEEKTPIKKPGDGRKVTFFEPGSGDENGTS) is disordered. Residues 366-384 (LKSEEKTPIKKPGDGRKVT) show a composition bias toward basic and acidic residues. The residue at position 390 (S390) is a Phosphoserine.

As to quaternary structure, binds tubulin. Binds with low affinity single-stranded RNA or DNA homopolymers. Interacts with CASC3 in an RNA-dependent manner. Identified in a mRNP complex, at least composed of DHX9, DDX3X, ELAVL1, HNRNPU, IGF2BP1, ILF3, PABPC1, PCBP2, PTBP2, STAU1, STAU2, SYNCRIP and YBX1. (Microbial infection) Interacts with HERV-K rec and gag proteins. In terms of assembly, (Microbial infection) Interacts with HIV-1 GAG polyprotein. As to quaternary structure, (Microbial infection) Interacts with influenza virus NS1 protein. (Microbial infection) Interacts with Ebola virus NP, VP30 and VP35. In terms of tissue distribution, widely expressed. Expressed in brain, pancreas, heart, skeletal muscles, liver, lung, kidney and placenta.

It localises to the cytoplasm. The protein resides in the rough endoplasmic reticulum. In terms of biological role, binds double-stranded RNA (regardless of the sequence) and tubulin. May play a role in specific positioning of mRNAs at given sites in the cell by cross-linking cytoskeletal and RNA components, and in stimulating their translation at the site. Its function is as follows. (Microbial infection) Plays a role in virus particles production of many viruses including of HIV-1, HERV-K, ebola virus and influenza virus. Acts by interacting with various viral proteins involved in particle budding process. This Homo sapiens (Human) protein is Double-stranded RNA-binding protein Staufen homolog 1 (STAU1).